A 663-amino-acid polypeptide reads, in one-letter code: Transketolase 2 (663 aa).

H25 serves as a coordination point for substrate. Thiamine diphosphate contacts are provided by residues H65 and 113-115 (GPL). D154 provides a ligand contact to Mg(2+). Residues G155 and N184 each contribute to the thiamine diphosphate site. Mg(2+) is bound by residues N184 and I186. Substrate contacts are provided by H259, R356, and S383. H259 provides a ligand contact to thiamine diphosphate. The active-site Proton donor is E410. F436 serves as a coordination point for thiamine diphosphate. Substrate-binding residues include H460, D468, and R519.

Belongs to the transketolase family. In terms of assembly, homodimer. It depends on Mg(2+) as a cofactor. The cofactor is Ca(2+). Mn(2+) serves as cofactor. Requires Co(2+) as cofactor. Thiamine diphosphate is required as a cofactor.

The catalysed reaction is D-sedoheptulose 7-phosphate + D-glyceraldehyde 3-phosphate = aldehydo-D-ribose 5-phosphate + D-xylulose 5-phosphate. In terms of biological role, catalyzes the transfer of a two-carbon ketol group from a ketose donor to an aldose acceptor, via a covalent intermediate with the cofactor thiamine pyrophosphate. The chain is Transketolase 2 (tkt2) from Vibrio parahaemolyticus serotype O3:K6 (strain RIMD 2210633).